A 636-amino-acid chain; its full sequence is Golgin subfamily A member 8F (636 aa).

2 disordered regions span residues 1-72 (MAEE…SATL) and 107-127 (NKQVEHQLEEEKKANNEKQKA). The span at 38–50 (TNGSIHETATSGG) shows a compositional bias: polar residues. Coiled coils occupy residues 93 to 148 (VSQL…LNTD), 211 to 263 (LEQS…MSQE), and 306 to 412 (EVEL…QQKQ). The segment covering 109 to 127 (QVEHQLEEEKKANNEKQKA) has biased composition (basic and acidic residues). 4 disordered regions span residues 344–364 (LREQEERLQEQQERLPEQEER), 422–449 (ALPGEGDGGGHLDSEGEEAPRPIPSIPQ), 496–537 (PITK…GVAA), and 588–612 (PVQGEAREGSPHDNPTAQPIVQDHQ). Basic and acidic residues predominate over residues 429 to 441 (GGGHLDSEGEEAP). The span at 509-522 (PGGGHHQAGPGQGG) shows a compositional bias: gly residues.

This sequence belongs to the GOLGA8 family.

This chain is Golgin subfamily A member 8F, found in Homo sapiens (Human).